A 1563-amino-acid polypeptide reads, in one-letter code: Superkiller complex protein 3 (1563 aa).

S2 is subject to N-acetylserine. TPR repeat units follow at residues V6–N39, Y40–Q73, Y157–I196, G272–C305, A307–F339, P386–L419, A420–V453, E455–M492, G493–D527, K564–D597, C598–S631, T632–Y665, Y633–Y665, G673–V713, V790–N824, L826–N860, A861–Y894, A980–A1013, N1020–D1053, I1055–E1084, K1325–Q1358, and V1399–Q1432.

This sequence belongs to the SKI3 family. Component of the SKI complex which consists of SKIC2, SKIC3 and SKIC8. Interacts with PAF1.

It is found in the cytoplasm. It localises to the nucleus. Functionally, component of the SKI complex, a multiprotein complex that assists the RNA-degrading exosome during the mRNA decay and quality-control pathways. The SKI complex catalyzes mRNA extraction from 80S ribosomal complexes in the 3'-5' direction and channels mRNA to the cytosolic exosome for degradation. SKI-mediated extraction of mRNA from stalled ribosomes allow binding of the Pelota-HBS1L complex and subsequent ribosome disassembly by ABCE1 for ribosome recycling. In the nucleus, the SKI complex associates with transcriptionally active genes in a manner dependent on PAF1 complex (PAF1C). This Mus musculus (Mouse) protein is Superkiller complex protein 3.